We begin with the raw amino-acid sequence, 403 residues long: Argininosuccinate synthase (403 aa).

ATP is bound by residues 12–20 (AYSGGLDTS) and alanine 39. Positions 91 and 96 each coordinate L-citrulline. Glycine 121 lines the ATP pocket. Residues threonine 123, asparagine 127, and aspartate 128 each coordinate L-aspartate. Position 127 (asparagine 127) interacts with L-citrulline. Residues arginine 131, serine 180, serine 189, glutamate 265, and tyrosine 277 each contribute to the L-citrulline site.

The protein belongs to the argininosuccinate synthase family. Type 1 subfamily. As to quaternary structure, homotetramer.

Its subcellular location is the cytoplasm. It catalyses the reaction L-citrulline + L-aspartate + ATP = 2-(N(omega)-L-arginino)succinate + AMP + diphosphate + H(+). The protein operates within amino-acid biosynthesis; L-arginine biosynthesis; L-arginine from L-ornithine and carbamoyl phosphate: step 2/3. This is Argininosuccinate synthase from Vibrio vulnificus (strain CMCP6).